The chain runs to 160 residues: uncharacterized protein (160 aa).

The RING-type zinc-finger motif lies at 8 to 46 (CAVCLDFFVEPCIIECGHSYCRFCIESHLNINEKCPLCR).

This is an uncharacterized protein from Caenorhabditis elegans.